The primary structure comprises 255 residues: Pyridoxine 5'-phosphate synthase (255 aa).

A 3-amino-2-oxopropyl phosphate-binding site is contributed by Asn-6. Residue 8–9 (DH) coordinates 1-deoxy-D-xylulose 5-phosphate. Arg-17 provides a ligand contact to 3-amino-2-oxopropyl phosphate. The active-site Proton acceptor is His-41. 1-deoxy-D-xylulose 5-phosphate contacts are provided by Arg-43 and His-48. Glu-68 (proton acceptor) is an active-site residue. Thr-96 contributes to the 1-deoxy-D-xylulose 5-phosphate binding site. His-208 acts as the Proton donor in catalysis. 3-amino-2-oxopropyl phosphate-binding positions include Gly-209 and 230 to 231 (GQ).

Belongs to the PNP synthase family. As to quaternary structure, homooctamer; tetramer of dimers.

It is found in the cytoplasm. The enzyme catalyses 3-amino-2-oxopropyl phosphate + 1-deoxy-D-xylulose 5-phosphate = pyridoxine 5'-phosphate + phosphate + 2 H2O + H(+). Its pathway is cofactor biosynthesis; pyridoxine 5'-phosphate biosynthesis; pyridoxine 5'-phosphate from D-erythrose 4-phosphate: step 5/5. Catalyzes the complicated ring closure reaction between the two acyclic compounds 1-deoxy-D-xylulose-5-phosphate (DXP) and 3-amino-2-oxopropyl phosphate (1-amino-acetone-3-phosphate or AAP) to form pyridoxine 5'-phosphate (PNP) and inorganic phosphate. The sequence is that of Pyridoxine 5'-phosphate synthase from Campylobacter lari (strain RM2100 / D67 / ATCC BAA-1060).